The chain runs to 91 residues: Signal recognition particle 19 kDa protein (91 aa).

Belongs to the SRP19 family. Part of the signal recognition particle protein translocation system, which is composed of SRP and FtsY. Archaeal SRP consists of a 7S RNA molecule of 300 nucleotides and two protein subunits: SRP54 and SRP19.

The protein resides in the cytoplasm. Functionally, involved in targeting and insertion of nascent membrane proteins into the cytoplasmic membrane. Binds directly to 7S RNA and mediates binding of the 54 kDa subunit of the SRP. This Methanothermobacter thermautotrophicus (strain ATCC 29096 / DSM 1053 / JCM 10044 / NBRC 100330 / Delta H) (Methanobacterium thermoautotrophicum) protein is Signal recognition particle 19 kDa protein.